A 147-amino-acid chain; its full sequence is uncharacterized protein (147 aa).

The region spanning 44-147 (LVGYIDKEIH…LKSIKERLSI (104 aa)) is the HTH LytTR-type domain.

The protein localises to the cytoplasm. This is an uncharacterized protein from Staphylococcus aureus (strain COL).